A 333-amino-acid chain; its full sequence is Holliday junction branch migration complex subunit RuvB (333 aa).

The large ATPase domain (RuvB-L) stretch occupies residues 1-182; the sequence is MEERMVSAEA…FGVMARLEYY (182 aa). Residues I21, R22, G63, K66, T67, T68, 129-131, R172, Y182, and R219 each bind ATP; that span reads EDY. T67 contacts Mg(2+). The interval 183-253 is small ATPAse domain (RuvB-S); that stretch reads NVEELTTIIE…RAIESLERLQ (71 aa). Residues 256 to 333 form a head domain (RuvB-H) region; the sequence is RLGLDHIDHK…EHFNMEVPNK (78 aa). 2 residues coordinate DNA: R311 and R316.

It belongs to the RuvB family. As to quaternary structure, homohexamer. Forms an RuvA(8)-RuvB(12)-Holliday junction (HJ) complex. HJ DNA is sandwiched between 2 RuvA tetramers; dsDNA enters through RuvA and exits via RuvB. An RuvB hexamer assembles on each DNA strand where it exits the tetramer. Each RuvB hexamer is contacted by two RuvA subunits (via domain III) on 2 adjacent RuvB subunits; this complex drives branch migration. In the full resolvosome a probable DNA-RuvA(4)-RuvB(12)-RuvC(2) complex forms which resolves the HJ.

The protein localises to the cytoplasm. The catalysed reaction is ATP + H2O = ADP + phosphate + H(+). Functionally, the RuvA-RuvB-RuvC complex processes Holliday junction (HJ) DNA during genetic recombination and DNA repair, while the RuvA-RuvB complex plays an important role in the rescue of blocked DNA replication forks via replication fork reversal (RFR). RuvA specifically binds to HJ cruciform DNA, conferring on it an open structure. The RuvB hexamer acts as an ATP-dependent pump, pulling dsDNA into and through the RuvAB complex. RuvB forms 2 homohexamers on either side of HJ DNA bound by 1 or 2 RuvA tetramers; 4 subunits per hexamer contact DNA at a time. Coordinated motions by a converter formed by DNA-disengaged RuvB subunits stimulates ATP hydrolysis and nucleotide exchange. Immobilization of the converter enables RuvB to convert the ATP-contained energy into a lever motion, pulling 2 nucleotides of DNA out of the RuvA tetramer per ATP hydrolyzed, thus driving DNA branch migration. The RuvB motors rotate together with the DNA substrate, which together with the progressing nucleotide cycle form the mechanistic basis for DNA recombination by continuous HJ branch migration. Branch migration allows RuvC to scan DNA until it finds its consensus sequence, where it cleaves and resolves cruciform DNA. The sequence is that of Holliday junction branch migration complex subunit RuvB from Halalkalibacterium halodurans (strain ATCC BAA-125 / DSM 18197 / FERM 7344 / JCM 9153 / C-125) (Bacillus halodurans).